The following is a 75-amino-acid chain: Small integral membrane protein 7 (75 aa).

Residues 1 to 17 form the signal peptide; sequence MIGDILLFGTLLMNAGA. The Extracellular segment spans residues 18–53; sequence VLNFKLKKKDTQGFGEESREPSTGDNIREFLLSLRY. The chain crosses the membrane as a helical span at residues 54–74; the sequence is FRIFIALWNIFMMFCMIVLFG. A topological domain (cytoplasmic) is located at residue serine 75.

This sequence belongs to the SMIM7 family.

It localises to the membrane. This Homo sapiens (Human) protein is Small integral membrane protein 7 (SMIM7).